The following is a 443-amino-acid chain: Threonine/serine transporter TdcC (443 aa).

Transmembrane regions (helical) follow at residues 22-42 (TTWTLGLFGTAIGAGVLFFPI), 44-64 (AGFGGLIPILVMLVLAYPIAF), 97-117 (GVVITFLYFFAICPLLWIYGV), 135-155 (ALNRGFVALFLLLLMAVIIWF), 163-183 (VMSFLVWPFIASLVLISLSLI), 207-227 (ILVTVWLGISIMVFSFNFSPI), 259-279 (ASILMVAVVMFFAFSCLFALS), 319-339 (ASIIALVAIFKSFFGHYLGTL), 366-386 (LSMVFIMGSTWLVAYVNPNIL), 389-409 (IEAMGAPIIASLLCLLPMYAI), and 422-442 (IDNVFVTAIGLLTISNIVYKV).

This sequence belongs to the amino acid/polyamine transporter 2 family. SdaC/TdcC subfamily.

The protein localises to the cell inner membrane. It catalyses the reaction L-threonine(in) + H(+)(in) = L-threonine(out) + H(+)(out). The catalysed reaction is L-serine(in) + H(+)(in) = L-serine(out) + H(+)(out). Involved in the import of threonine and serine into the cell, with the concomitant import of a proton (symport system). The polypeptide is Threonine/serine transporter TdcC (Escherichia fergusonii (strain ATCC 35469 / DSM 13698 / CCUG 18766 / IAM 14443 / JCM 21226 / LMG 7866 / NBRC 102419 / NCTC 12128 / CDC 0568-73)).